Consider the following 365-residue polypeptide: Putative nudix hydrolase 1 (365 aa).

The Nudix hydrolase domain maps to 72–201 (VNYVAAAIIL…DFIRLVDEAV (130 aa)). Positions 109-130 (GRVEAGETIEEAVVREVKEETG) match the Nudix box motif. 2 residues coordinate Mg(2+): Glu-124 and Glu-128.

Belongs to the Nudix hydrolase family. Mg(2+) serves as cofactor. The cofactor is Mn(2+).

Probably mediates the hydrolysis of some nucleoside diphosphate derivatives. This Caenorhabditis elegans protein is Putative nudix hydrolase 1 (ndx-1).